Reading from the N-terminus, the 148-residue chain is Probable calcium-binding protein CML7 (148 aa).

EF-hand domains are found at residues 9 to 44 (EQVA…LGGN), 80 to 115 (PFDR…IGEK), and 116 to 148 (LEPH…IVAK). Ca(2+) is bound by residues aspartate 22, aspartate 24, aspartate 26, arginine 28, glutamate 33, aspartate 93, aspartate 95, serine 97, threonine 99, and aspartate 104.

Potential calcium sensor. The sequence is that of Probable calcium-binding protein CML7 (CML7) from Oryza sativa subsp. japonica (Rice).